Here is a 287-residue protein sequence, read N- to C-terminus: Protein TMEPAI (287 aa).

The Lumenal portion of the chain corresponds to 1–40 (MHRLMGVNSTAAAAAGQPNVSCTCNCKRSLFQSMEITELE). Residues 41–63 (FVQIIIIVVVMMVMVVVITCLLS) traverse the membrane as a helical segment. Over 64-287 (HYKLSARSFI…EKDKQKGHPL (224 aa)) the chain is Cytoplasmic. Positions 158–161 (PPPY) match the PPxY motif 1 motif. The SMAD interaction motif (SIM) signature appears at 186–189 (PPNR). Residues 229-232 (PPTY) carry the PPxY motif 2 motif. A disordered region spans residues 239 to 258 (YPGSSFQHQQSSGPPSLLEG). Polar residues predominate over residues 242–252 (SSFQHQQSSGP).

Belongs to the PMEPA1 family. As to quaternary structure, interacts with NEDD4 (via PPxY motifs). Interacts with AR. Interacts with LDLRAD4. Interacts (via the SMAD interaction motif) with SMAD2 and SMAD3. As to expression, highest expression in prostate. Also expressed in ovary.

It is found in the early endosome membrane. It localises to the golgi apparatus membrane. Its function is as follows. Functions as a negative regulator of TGF-beta signaling and thereby probably plays a role in cell proliferation, differentiation, apoptosis, motility, extracellular matrix production and immunosuppression. In the canonical TGF-beta pathway, ZFYVE9/SARA recruits the intracellular signal transducer and transcriptional modulators SMAD2 and SMAD3 to the TGF-beta receptor. Phosphorylated by the receptor, SMAD2 and SMAD3 then form a heteromeric complex with SMAD4 that translocates to the nucleus to regulate transcription. Through interaction with SMAD2 and SMAD3, LDLRAD4 may compete with ZFYVE9 and SMAD4 and prevent propagation of the intracellular signal. Also involved in down-regulation of the androgen receptor (AR), enhancing ubiquitination and proteasome-mediated degradation of AR, probably by recruiting NEDD4. The sequence is that of Protein TMEPAI (PMEPA1) from Homo sapiens (Human).